Here is a 419-residue protein sequence, read N- to C-terminus: Glucose-1-phosphate adenylyltransferase (419 aa).

Alpha-D-glucose 1-phosphate is bound by residues Y106, G171, 186 to 187 (EK), and S204.

This sequence belongs to the bacterial/plant glucose-1-phosphate adenylyltransferase family. Homotetramer.

It catalyses the reaction alpha-D-glucose 1-phosphate + ATP + H(+) = ADP-alpha-D-glucose + diphosphate. It functions in the pathway glycan biosynthesis; glycogen biosynthesis. Its function is as follows. Involved in the biosynthesis of ADP-glucose, a building block required for the elongation reactions to produce glycogen. Catalyzes the reaction between ATP and alpha-D-glucose 1-phosphate (G1P) to produce pyrophosphate and ADP-Glc. In Roseobacter denitrificans (strain ATCC 33942 / OCh 114) (Erythrobacter sp. (strain OCh 114)), this protein is Glucose-1-phosphate adenylyltransferase.